Consider the following 176-residue polypeptide: Ribosome maturation factor RimM (176 aa).

The PRC barrel domain occupies 93–166 (EGEYYHADLI…RVVIEMPGEI (74 aa)).

This sequence belongs to the RimM family. In terms of assembly, binds ribosomal protein uS19.

It localises to the cytoplasm. In terms of biological role, an accessory protein needed during the final step in the assembly of 30S ribosomal subunit, possibly for assembly of the head region. Essential for efficient processing of 16S rRNA. May be needed both before and after RbfA during the maturation of 16S rRNA. It has affinity for free ribosomal 30S subunits but not for 70S ribosomes. The sequence is that of Ribosome maturation factor RimM from Rhodopseudomonas palustris (strain BisA53).